A 407-amino-acid chain; its full sequence is Phosphoglycerate kinase (407 aa).

Residues 21–23 (DLN), R36, 59–62 (HQGR), R116, and R156 each bind substrate. ATP is bound by residues E332 and 358-361 (GGDT).

The protein belongs to the phosphoglycerate kinase family. Monomer.

It localises to the cytoplasm. The catalysed reaction is (2R)-3-phosphoglycerate + ATP = (2R)-3-phospho-glyceroyl phosphate + ADP. The protein operates within carbohydrate degradation; glycolysis; pyruvate from D-glyceraldehyde 3-phosphate: step 2/5. The sequence is that of Phosphoglycerate kinase from Halorubrum lacusprofundi (strain ATCC 49239 / DSM 5036 / JCM 8891 / ACAM 34).